The primary structure comprises 369 residues: DNA replication and repair protein RecF (369 aa).

ATP is bound at residue 30 to 37 (GINAQGKT).

This sequence belongs to the RecF family.

It localises to the cytoplasm. The RecF protein is involved in DNA metabolism; it is required for DNA replication and normal SOS inducibility. RecF binds preferentially to single-stranded, linear DNA. It also seems to bind ATP. The chain is DNA replication and repair protein RecF from Macrococcus caseolyticus (strain JCSC5402) (Macrococcoides caseolyticum).